Consider the following 614-residue polypeptide: DNA ligase (614 aa).

NAD(+) contacts are provided by residues 29–33 (DQDYD) and 73–74 (SI). The active-site N6-AMP-lysine intermediate is the Lys111. The NAD(+) site is built by Arg127, Glu158, and Lys270. Zn(2+)-binding residues include Cys358, Cys361, Cys374, and Cys380. The region spanning 538–614 (TLTHELFDKK…MTETDYLSKI (77 aa)) is the BRCT domain.

The protein belongs to the NAD-dependent DNA ligase family. LigA subfamily. It depends on Mg(2+) as a cofactor. The cofactor is Mn(2+).

It catalyses the reaction NAD(+) + (deoxyribonucleotide)n-3'-hydroxyl + 5'-phospho-(deoxyribonucleotide)m = (deoxyribonucleotide)n+m + AMP + beta-nicotinamide D-nucleotide.. Functionally, DNA ligase that catalyzes the formation of phosphodiester linkages between 5'-phosphoryl and 3'-hydroxyl groups in double-stranded DNA using NAD as a coenzyme and as the energy source for the reaction. It is essential for DNA replication and repair of damaged DNA. This is DNA ligase from Ruthia magnifica subsp. Calyptogena magnifica.